A 426-amino-acid chain; its full sequence is 3-phosphoshikimate 1-carboxyvinyltransferase (426 aa).

Residues Lys22, Ser23, and Arg27 each contribute to the 3-phosphoshikimate site. Lys22 serves as a coordination point for phosphoenolpyruvate. 2 residues coordinate phosphoenolpyruvate: Gly96 and Arg124. Residues Ser170, Ser171, Gln172, Ser198, Asp314, Asn337, and Lys341 each coordinate 3-phosphoshikimate. A phosphoenolpyruvate-binding site is contributed by Gln172. Asp314 functions as the Proton acceptor in the catalytic mechanism. The phosphoenolpyruvate site is built by Arg345, Arg387, and Lys412.

This sequence belongs to the EPSP synthase family. In terms of assembly, monomer.

It localises to the cytoplasm. It carries out the reaction 3-phosphoshikimate + phosphoenolpyruvate = 5-O-(1-carboxyvinyl)-3-phosphoshikimate + phosphate. Its pathway is metabolic intermediate biosynthesis; chorismate biosynthesis; chorismate from D-erythrose 4-phosphate and phosphoenolpyruvate: step 6/7. Functionally, catalyzes the transfer of the enolpyruvyl moiety of phosphoenolpyruvate (PEP) to the 5-hydroxyl of shikimate-3-phosphate (S3P) to produce enolpyruvyl shikimate-3-phosphate and inorganic phosphate. The polypeptide is 3-phosphoshikimate 1-carboxyvinyltransferase (Shewanella oneidensis (strain ATCC 700550 / JCM 31522 / CIP 106686 / LMG 19005 / NCIMB 14063 / MR-1)).